An 899-amino-acid chain; its full sequence is Nuclear factor NF-kappa-B p100 subunit (899 aa).

Residues Ser23 and Ser161 each carry the phosphoserine modification. The 190-residue stretch at 35-224 (ADGPYLVIVE…QPIHDSKSPG (190 aa)) folds into the RHD domain. The Nuclear localization signal motif lies at 337–341 (RKRRK). Positions 346 to 377 (FSQPFGGGSHMGGGSGGSAGGYGGAGGGGSLG) are GRR. The disordered stretch occupies residues 403-434 (GGAQMAGSRRDTDAGEGAEEPRTPPEAPQGEP). Residues 410-425 (SRRDTDAGEGAEEPRT) are compositionally biased toward basic and acidic residues. A Phosphothreonine modification is found at Thr425. 6 ANK repeats span residues 487 to 516 (NGDT…HAQY), 526 to 555 (LHQT…DPTL), 559 to 590 (HGDS…HAVP), 599 to 628 (EGLY…EVEA), 633 to 663 (GGRT…NVNA), and 667 to 696 (AGNT…DIHA). Positions 698-734 (NEEPLCPLPSPSTSGSDSDSEGPERDTQRNFRGHTPL) are disordered. A phosphoserine mark is found at Ser713, Ser715, and Ser717. An ANK 7 repeat occupies 729–755 (RGHTPLDLTCSTKVKTLLLNAAQNTTE). The Death domain maps to 764 to 851 (AGPGLSLGDA…EGVRLLKGPE (88 aa)). The residue at position 812 (Ser812) is a Phosphoserine. Over residues 851–865 (ETRDKLPSTEVKEDS) the composition is skewed to basic and acidic residues. The segment at 851 to 899 (ETRDKLPSTEVKEDSAYGSQSVEQEAEKLCPPPEPPGGLCHGHPQPQVH) is disordered. Lys855 participates in a covalent cross-link: Glycyl lysine isopeptide (Lys-Gly) (interchain with G-Cter in ubiquitin). A phosphoserine; by MAP3K14 mark is found at Ser865 and Ser869. The span at 887-899 (GGLCHGHPQPQVH) shows a compositional bias: low complexity.

As to quaternary structure, component of the NF-kappa-B RelB-p52 complex. Homodimer; component of the NF-kappa-B p52-p52 complex. Component of the NF-kappa-B p65-p52 complex. Component of the NF-kappa-B p52-c-Rel complex. NFKB2/p52 interacts with NFKBIE. Component of a complex consisting of the NF-kappa-B p50-p50 homodimer and BCL3. Directly interacts with MEN1. Post-translationally, while translation occurs, the particular unfolded structure after the GRR repeat promotes the generation of p52 making it an acceptable substrate for the proteasome. This process is known as cotranslational processing. The processed form is active and the unprocessed form acts as an inhibitor (I kappa B-like), being able to form cytosolic complexes with NF-kappa B, trapping it in the cytoplasm. Complete folding of the region downstream of the GRR repeat precludes processing. Subsequent to MAP3K14-dependent serine phosphorylation, p100 polyubiquitination occurs then triggering its proteasome-dependent processing. In terms of processing, constitutive processing is tightly suppressed by its C-terminal processing inhibitory domain, named PID, which contains the death domain. Post-translationally, ubiquitinated by TRIM55; leading to processing by VCP and subsequent ubiquitin-dependent protein degradation by the proteasome. In terms of tissue distribution, highly expressed in lymph nodes and thymus.

Its subcellular location is the nucleus. It is found in the cytoplasm. NF-kappa-B is a pleiotropic transcription factor present in almost all cell types and is the endpoint of a series of signal transduction events that are initiated by a vast array of stimuli related to many biological processes such as inflammation, immunity, differentiation, cell growth, tumorigenesis and apoptosis. NF-kappa-B is a homo- or heterodimeric complex formed by the Rel-like domain-containing proteins RELA/p65, RELB, NFKB1/p105, NFKB1/p50, REL and NFKB2/p52. The dimers bind at kappa-B sites in the DNA of their target genes and the individual dimers have distinct preferences for different kappa-B sites that they can bind with distinguishable affinity and specificity. Different dimer combinations act as transcriptional activators or repressors, respectively. NF-kappa-B is controlled by various mechanisms of post-translational modification and subcellular compartmentalization as well as by interactions with other cofactors or corepressors. NF-kappa-B complexes are held in the cytoplasm in an inactive state complexed with members of the NF-kappa-B inhibitor (I-kappa-B) family. In a conventional activation pathway, I-kappa-B is phosphorylated by I-kappa-B kinases (IKKs) in response to different activators, subsequently degraded thus liberating the active NF-kappa-B complex which translocates to the nucleus. In a non-canonical activation pathway, the MAP3K14-activated CHUK/IKKA homodimer phosphorylates NFKB2/p100 associated with RelB, inducing its proteolytic processing to NFKB2/p52 and the formation of NF-kappa-B RelB-p52 complexes. The NF-kappa-B heterodimeric RelB-p52 complex is a transcriptional activator. The NF-kappa-B p52-p52 homodimer is a transcriptional repressor. NFKB2 appears to have dual functions such as cytoplasmic retention of attached NF-kappa-B proteins by p100 and generation of p52 by a cotranslational processing. The proteasome-mediated process ensures the production of both p52 and p100 and preserves their independent function. p52 binds to the kappa-B consensus sequence 5'-GGRNNYYCC-3', located in the enhancer region of genes involved in immune response and acute phase reactions. p52 and p100 are respectively the minor and major form; the processing of p100 being relatively poor. Isoform p49 is a subunit of the NF-kappa-B protein complex, which stimulates the HIV enhancer in synergy with p65. In concert with RELB, regulates the circadian clock by repressing the transcriptional activator activity of the CLOCK-BMAL1 heterodimer. This Mus musculus (Mouse) protein is Nuclear factor NF-kappa-B p100 subunit (Nfkb2).